Reading from the N-terminus, the 835-residue chain is Disease resistance protein RPP13 (835 aa).

The stretch at 25 to 41 (MAVKEDLEELKTELTCI) forms a coiled coil. The 310-residue stretch at 144–453 (SSLRVRQLRR…AEGFIQGDEE (310 aa)) folds into the NB-ARC domain. An ATP-binding site is contributed by 192–199 (GMGGLGKT).

The protein belongs to the disease resistance NB-LRR family. RPP13 subfamily.

Functionally, disease resistance protein. Resistance proteins guard the plant against pathogens that contain an appropriate avirulence protein via an indirect interaction with this avirulence protein. That triggers a defense system including the hypersensitive response, which restricts the pathogen growth. In contrast to other resistance proteins, it works independently of ESD1 and NSD1 proteins and does not require the accumulation of salicylic acid, suggesting the existence of an independent signaling pathway. The specificity to avirulence proteins differs in the different cultivars. This is Disease resistance protein RPP13 (RPP13) from Arabidopsis thaliana (Mouse-ear cress).